The chain runs to 236 residues: 2,3,4,5-tetrahydropyridine-2,6-dicarboxylate N-acetyltransferase (236 aa).

The protein belongs to the transferase hexapeptide repeat family. DapH subfamily.

It carries out the reaction (S)-2,3,4,5-tetrahydrodipicolinate + acetyl-CoA + H2O = L-2-acetamido-6-oxoheptanedioate + CoA. It participates in amino-acid biosynthesis; L-lysine biosynthesis via DAP pathway; LL-2,6-diaminopimelate from (S)-tetrahydrodipicolinate (acetylase route): step 1/3. Its function is as follows. Catalyzes the transfer of an acetyl group from acetyl-CoA to tetrahydrodipicolinate. In Lactobacillus acidophilus (strain ATCC 700396 / NCK56 / N2 / NCFM), this protein is 2,3,4,5-tetrahydropyridine-2,6-dicarboxylate N-acetyltransferase.